Here is a 526-residue protein sequence, read N- to C-terminus: NAD(P)H-quinone oxidoreductase chain 4 1 (526 aa).

The next 14 helical transmembrane spans lie at 7–27 (FPWLSALVLLPLLAAFGIPLL), 35–55 (WYALAVGALDLGLMAYIFGWH), 86–106 (LSFPLVLLSGLITTLAIVAAW), 114–134 (LFFFLLLLMYGAQVGVFLAQD), 135–155 (LLLFFLMWEIELVPVYLLIAI), 168–188 (FILYTAAASIFILVGSLAMAF), 208–228 (ALQILAYAAFLIAFGVKLPVF), 242–262 (SAPISMILAGVLLKMGGYGLI), 276–296 (FAPVLAVLGAVNIVYGALAAL), 310–330 (IAHMGFVLIGIAAFTELGLNG), 331–351 (ALLQMISHGLIAAVLFFLTGI), 374–396 (AFALFTAGSLASLALPGMSGFVG), 417–437 (GIALLAAVGIILTPIYLLSML), and 463–483 (MAVALCLLLPILGIGLYPRLA).

It belongs to the complex I subunit 4 family.

The protein resides in the cellular thylakoid membrane. The catalysed reaction is a plastoquinone + NADH + (n+1) H(+)(in) = a plastoquinol + NAD(+) + n H(+)(out). It carries out the reaction a plastoquinone + NADPH + (n+1) H(+)(in) = a plastoquinol + NADP(+) + n H(+)(out). In terms of biological role, NDH-1 shuttles electrons from NAD(P)H, via FMN and iron-sulfur (Fe-S) centers, to quinones in the respiratory chain. The immediate electron acceptor for the enzyme in this species is believed to be plastoquinone. Couples the redox reaction to proton translocation (for every two electrons transferred, four hydrogen ions are translocated across the cytoplasmic membrane), and thus conserves the redox energy in a proton gradient. The sequence is that of NAD(P)H-quinone oxidoreductase chain 4 1 from Synechococcus sp. (strain JA-3-3Ab) (Cyanobacteria bacterium Yellowstone A-Prime).